A 376-amino-acid polypeptide reads, in one-letter code: Alanine racemase (376 aa).

The active-site Proton acceptor; specific for D-alanine is lysine 36. Position 36 is an N6-(pyridoxal phosphate)lysine (lysine 36). Substrate is bound at residue arginine 134. Tyrosine 266 functions as the Proton acceptor; specific for L-alanine in the catalytic mechanism. Methionine 314 lines the substrate pocket.

This sequence belongs to the alanine racemase family. Pyridoxal 5'-phosphate serves as cofactor.

The enzyme catalyses L-alanine = D-alanine. It participates in amino-acid biosynthesis; D-alanine biosynthesis; D-alanine from L-alanine: step 1/1. In terms of biological role, catalyzes the interconversion of L-alanine and D-alanine. May also act on other amino acids. This Nitratidesulfovibrio vulgaris (strain ATCC 29579 / DSM 644 / CCUG 34227 / NCIMB 8303 / VKM B-1760 / Hildenborough) (Desulfovibrio vulgaris) protein is Alanine racemase (alr).